We begin with the raw amino-acid sequence, 95 residues long: MRAIGKLPKGVLILEFIGMMLLAVALLSVSDSLSLPEPFSRPEVQILMIFLGVLLMLPAAVVVILQVAKRLAPQLMNRPPQYSRSEREKDNDANH.

This is an uncharacterized protein from Escherichia coli (strain K12).